The chain runs to 616 residues: Protein cereblon (616 aa).

Disordered regions lie at residues 1–39 (MDEE…DDSV), 63–137 (FGPS…AMPR), and 182–220 (SQER…DIDM). A compositionally biased stretch (low complexity) spans 11-32 (AQEQEVAGSAGEAAAGPSGAEV). The span at 96–107 (SEEDIVLDDGTE) shows a compositional bias: acidic residues. The span at 183-192 (QERRRSRNSD) shows a compositional bias: basic and acidic residues. The span at 194–203 (VSPEAEDDEL) shows a compositional bias: acidic residues. A compositionally biased stretch (pro residues) spans 206 to 215 (HPPPPPPRPP). A Lon N-terminal domain is found at 257 to 482 (HMLIFLHQYI…LIGGILKEET (226 aa)). The 110-residue stretch at 481-590 (ETLFYCRYCN…LAGSSVRIGK (110 aa)) folds into the CULT domain. Residues C486, C489, C555, and C558 each coordinate Zn(2+).

Belongs to the CRBN family. As to quaternary structure, likely a component of a DCX (DDB1-CUL4-X-box) protein ligase complex. May interact with pic/DDB1. In terms of processing, ubiquitinated.

The protein localises to the nucleus. Its pathway is protein modification; protein ubiquitination. Its function is as follows. Substrate recognition component of a DCX (DDB1-CUL4-X-box) E3 protein ligase complex that mediates the ubiquitination and subsequent proteasomal degradation of target proteins. Has an essential role in mediating growth by negatively regulating insulin signaling. It also has a role in maintaining presynaptic function in the neuromuscular junction synapses of third-instar larvae. This chain is Protein cereblon, found in Drosophila persimilis (Fruit fly).